We begin with the raw amino-acid sequence, 436 residues long: G2/mitotic-specific cyclin-B (436 aa).

Polar residues predominate over residues 1 to 17 (MSTINNPLNIKTRSHSS). Residues 1 to 33 (MSTINNPLNIKTRSHSSMGGGMIMDENKVPKSS) form a disordered region.

This sequence belongs to the cyclin family. Cyclin AB subfamily. Interacts with the cdk1 protein kinase to form a serine/threonine kinase holoenzyme complex also known as maturation promoting factor (MPF). The cyclin subunit imparts substrate specificity to the complex.

In terms of biological role, essential for the control of the cell cycle at the G2/M (mitosis) transition. In Dictyostelium discoideum (Social amoeba), this protein is G2/mitotic-specific cyclin-B (cycB).